The following is a 145-amino-acid chain: MQFNIQDIIKMLPHSYPFLLLDKVTACVPNESATAIKNVTFNEPFFIGHFPNNPVMPGVLIVEAMAQACLVCVMSDSKCNFENYTIYFMSIELAKFRKPVIPGDILTIEVNVIHKRKDTCRFQCFARVDQALASEAQILAMIKKN.

His49 is a catalytic residue.

Belongs to the thioester dehydratase family. FabZ subfamily.

The protein resides in the cytoplasm. The enzyme catalyses a (3R)-hydroxyacyl-[ACP] = a (2E)-enoyl-[ACP] + H2O. In terms of biological role, involved in unsaturated fatty acids biosynthesis. Catalyzes the dehydration of short chain beta-hydroxyacyl-ACPs and long chain saturated and unsaturated beta-hydroxyacyl-ACPs. The sequence is that of 3-hydroxyacyl-[acyl-carrier-protein] dehydratase FabZ from Ehrlichia ruminantium (strain Welgevonden).